Here is a 475-residue protein sequence, read N- to C-terminus: Aspartyl/glutamyl-tRNA(Asn/Gln) amidotransferase subunit B (475 aa).

It belongs to the GatB/GatE family. GatB subfamily. As to quaternary structure, heterotrimer of A, B and C subunits.

It catalyses the reaction L-glutamyl-tRNA(Gln) + L-glutamine + ATP + H2O = L-glutaminyl-tRNA(Gln) + L-glutamate + ADP + phosphate + H(+). The catalysed reaction is L-aspartyl-tRNA(Asn) + L-glutamine + ATP + H2O = L-asparaginyl-tRNA(Asn) + L-glutamate + ADP + phosphate + 2 H(+). In terms of biological role, allows the formation of correctly charged Asn-tRNA(Asn) or Gln-tRNA(Gln) through the transamidation of misacylated Asp-tRNA(Asn) or Glu-tRNA(Gln) in organisms which lack either or both of asparaginyl-tRNA or glutaminyl-tRNA synthetases. The reaction takes place in the presence of glutamine and ATP through an activated phospho-Asp-tRNA(Asn) or phospho-Glu-tRNA(Gln). The protein is Aspartyl/glutamyl-tRNA(Asn/Gln) amidotransferase subunit B of Trichlorobacter lovleyi (strain ATCC BAA-1151 / DSM 17278 / SZ) (Geobacter lovleyi).